A 399-amino-acid polypeptide reads, in one-letter code: Beta-1,6-galactosyltransferase GALT31A (399 aa).

The Cytoplasmic segment spans residues M1–S12. Residues G13–N35 traverse the membrane as a helical; Signal-anchor for type II membrane protein segment. The Lumenal segment spans residues R36–F399.

Belongs to the glycosyltransferase 31 family. As to quaternary structure, interacts with GALT29A. It depends on Mn(2+) as a cofactor.

It localises to the golgi apparatus membrane. It functions in the pathway protein modification; protein glycosylation. Its function is as follows. Beta-galactosyltransferase involved in elongation of beta-1,6-linked galactan side chains on arabinogalactan proteins. Required for the progression of embryogenesis beyond the globular stage. Beta-galactosyltransferase involved in the biosynthesis of type II arabinogalactan. Transfers galactose from UDP-galactose to a mixture of various oligosaccharides derived from arabinogalactan proteins. Forms a complex with GALT29A that can work cooperatively to enhance the activities of adding galactose residues at O6 positions to beta-1,6-linked galactan and beta-1,3-linked galactan. This Arabidopsis thaliana (Mouse-ear cress) protein is Beta-1,6-galactosyltransferase GALT31A.